Consider the following 159-residue polypeptide: Urease accessory protein UreE (159 aa).

The protein belongs to the UreE family.

Its subcellular location is the cytoplasm. Involved in urease metallocenter assembly. Binds nickel. Probably functions as a nickel donor during metallocenter assembly. This is Urease accessory protein UreE from Vibrio parahaemolyticus.